The sequence spans 329 residues: Phospho-N-acetylmuramoyl-pentapeptide-transferase (329 aa).

9 consecutive transmembrane segments (helical) span residues 1–21 (MLLNGIVAAVITMIITIIGIP), 53–73 (MGGFVFVVVSLVVSLVAALVF), 76–96 (FSPAFITAWWVFAMYAVIGFL), 109–129 (GLTAKQKMLAQILIGIVSYFI), 141–161 (ILSWQVNIGIFFSIFIIIWLV), 175–195 (GLASITVAISLTAYAVIAVVH), 198–218 (YDVLLIILSVIGGLLGFFVFN), 237–257 (FLAIVSILLHAEWTLLLIGAV), and 309–329 (IVFWLFTAVLSVIALCIYFAF).

This sequence belongs to the glycosyltransferase 4 family. MraY subfamily. Requires Mg(2+) as cofactor.

The protein localises to the cell membrane. It carries out the reaction UDP-N-acetyl-alpha-D-muramoyl-L-alanyl-gamma-D-glutamyl-L-lysyl-D-alanyl-D-alanine + di-trans,octa-cis-undecaprenyl phosphate = Mur2Ac(oyl-L-Ala-gamma-D-Glu-L-Lys-D-Ala-D-Ala)-di-trans,octa-cis-undecaprenyl diphosphate + UMP. It functions in the pathway cell wall biogenesis; peptidoglycan biosynthesis. Its function is as follows. Catalyzes the initial step of the lipid cycle reactions in the biosynthesis of the cell wall peptidoglycan: transfers peptidoglycan precursor phospho-MurNAc-pentapeptide from UDP-MurNAc-pentapeptide onto the lipid carrier undecaprenyl phosphate, yielding undecaprenyl-pyrophosphoryl-MurNAc-pentapeptide, known as lipid I. In Lactococcus lactis subsp. cremoris (strain MG1363), this protein is Phospho-N-acetylmuramoyl-pentapeptide-transferase.